The primary structure comprises 200 residues: Lipopolysaccharide core heptose(II)-phosphate phosphatase (200 aa).

Residues 1–25 form the signal peptide; the sequence is MLAFCRSSLKSKKYFIILLALAAIA.

This sequence belongs to the phosphoglycerate mutase family. Ais subfamily.

It is found in the periplasm. It participates in bacterial outer membrane biogenesis; lipopolysaccharide metabolism. Functionally, catalyzes the dephosphorylation of heptose(II) of the outer membrane lipopolysaccharide core. The chain is Lipopolysaccharide core heptose(II)-phosphate phosphatase from Escherichia coli O6:K15:H31 (strain 536 / UPEC).